Here is a 428-residue protein sequence, read N- to C-terminus: Palmitoyltransferase ZDHHC23-B (428 aa).

Residues 1–82 (MSIMKKRSSR…RVPWISGARQ (82 aa)) are Cytoplasmic-facing. Residues 83-99 (IDVSLIPPLILLPVFLH) form a helical membrane-spanning segment. Residues 100 to 105 (IAALHY) are Lumenal-facing. A helical membrane pass occupies residues 106 to 125 (LLGIIMLTAMPITVLWYYFF). The Cytoplasmic segment spans residues 126-132 (THRKKGR). A helical membrane pass occupies residues 133 to 153 (TLFFLGLALFSLFYMFYLFLT). Topologically, residues 154 to 160 (QVVPRGE) are lumenal. Residues 161–181 (VTELQLAVVTAGVALTVIFLM) traverse the membrane as a helical segment. Residues 182-294 (LTKRGPGLVR…SCVGLANHRT (113 aa)) lie on the Cytoplasmic side of the membrane. Positions 250-300 (NWCAVCKVVRPQRAGHCRICGVCVLRLDHHCVWINSCVGLANHRTFLLTLL) constitute a DHHC domain. The S-palmitoyl cysteine intermediate role is filled by Cys-280. Residues 295-315 (FLLTLLFFLLTSIYGISLVLA) traverse the membrane as a helical segment. Over 316 to 350 (SVCPDQRVLTALFYCPDVYSQYSSALCFTCAWYSS) the chain is Lumenal. A helical membrane pass occupies residues 351-371 (IVTGGLLHLLLLQILNISLNV). Topologically, residues 372-428 (TEREARLALREKSAQRRLWGLIVHTGHYSRGFWSNWTEFLTMTEDTQPAGHKTEDLV) are cytoplasmic.

This sequence belongs to the DHHC palmitoyltransferase family.

Its subcellular location is the golgi apparatus membrane. The protein resides in the golgi apparatus. The protein localises to the trans-Golgi network membrane. The enzyme catalyses L-cysteinyl-[protein] + hexadecanoyl-CoA = S-hexadecanoyl-L-cysteinyl-[protein] + CoA. Its function is as follows. Palmitoyltransferase that could catalyze the addition of palmitate onto various protein substrates and be involved in a variety of cellular processes. The polypeptide is Palmitoyltransferase ZDHHC23-B (Danio rerio (Zebrafish)).